A 455-amino-acid chain; its full sequence is Ribulose bisphosphate carboxylase large chain (455 aa).

At Lys-5 the chain carries N6,N6,N6-trimethyllysine. 2 residues coordinate substrate: Asn-114 and Thr-164. The active-site Proton acceptor is Lys-166. Lys-168 serves as a coordination point for substrate. Lys-192, Asp-194, and Glu-195 together coordinate Mg(2+). The residue at position 192 (Lys-192) is an N6-carboxylysine. His-285 functions as the Proton acceptor in the catalytic mechanism. Residues Arg-286, His-318, and Ser-370 each contribute to the substrate site.

It belongs to the RuBisCO large chain family. Type I subfamily. In terms of assembly, heterohexadecamer of 8 large chains and 8 small chains; disulfide-linked. The disulfide link is formed within the large subunit homodimers. Requires Mg(2+) as cofactor. Post-translationally, the disulfide bond which can form in the large chain dimeric partners within the hexadecamer appears to be associated with oxidative stress and protein turnover.

The protein localises to the plastid. Its subcellular location is the chloroplast. The catalysed reaction is 2 (2R)-3-phosphoglycerate + 2 H(+) = D-ribulose 1,5-bisphosphate + CO2 + H2O. The enzyme catalyses D-ribulose 1,5-bisphosphate + O2 = 2-phosphoglycolate + (2R)-3-phosphoglycerate + 2 H(+). Functionally, ruBisCO catalyzes two reactions: the carboxylation of D-ribulose 1,5-bisphosphate, the primary event in carbon dioxide fixation, as well as the oxidative fragmentation of the pentose substrate in the photorespiration process. Both reactions occur simultaneously and in competition at the same active site. This chain is Ribulose bisphosphate carboxylase large chain, found in Senna didymobotrya (Popcorn cassia).